Reading from the N-terminus, the 232-residue chain is Phosphatidylserine decarboxylase proenzyme (232 aa).

S190 acts as the Schiff-base intermediate with substrate; via pyruvic acid in catalysis. S190 is subject to Pyruvic acid (Ser); by autocatalysis.

This sequence belongs to the phosphatidylserine decarboxylase family. PSD-A subfamily. Heterodimer of a large membrane-associated beta subunit and a small pyruvoyl-containing alpha subunit. Requires pyruvate as cofactor. Post-translationally, is synthesized initially as an inactive proenzyme. Formation of the active enzyme involves a self-maturation process in which the active site pyruvoyl group is generated from an internal serine residue via an autocatalytic post-translational modification. Two non-identical subunits are generated from the proenzyme in this reaction, and the pyruvate is formed at the N-terminus of the alpha chain, which is derived from the carboxyl end of the proenzyme. The post-translation cleavage follows an unusual pathway, termed non-hydrolytic serinolysis, in which the side chain hydroxyl group of the serine supplies its oxygen atom to form the C-terminus of the beta chain, while the remainder of the serine residue undergoes an oxidative deamination to produce ammonia and the pyruvoyl prosthetic group on the alpha chain.

It localises to the cell membrane. The catalysed reaction is a 1,2-diacyl-sn-glycero-3-phospho-L-serine + H(+) = a 1,2-diacyl-sn-glycero-3-phosphoethanolamine + CO2. It functions in the pathway phospholipid metabolism; phosphatidylethanolamine biosynthesis; phosphatidylethanolamine from CDP-diacylglycerol: step 2/2. In terms of biological role, catalyzes the formation of phosphatidylethanolamine (PtdEtn) from phosphatidylserine (PtdSer). In Rhodopseudomonas palustris (strain BisB18), this protein is Phosphatidylserine decarboxylase proenzyme.